The chain runs to 286 residues: UPF0761 membrane protein KPK_5501 (286 aa).

The next 7 helical transmembrane spans lie at 44 to 64 (LLSLVPLIAVVFALFAAFPMF), 74 to 94 (FIFANFIPATGDVIQGYIEQF), 104 to 124 (VGAFGLIVTSLLLMYSIDSAL), 140 to 160 (FAVYWMILTLGPLLAGASLAI), 183 to 203 (LFPLILSWAAFWLLYSIVPTT), 210 to 230 (AVIGALVAALLFEAGKKAFAL), and 244 to 264 (VISVVPILFVWVYWTWCIVLL).

Belongs to the UPF0761 family.

The protein resides in the cell inner membrane. In Klebsiella pneumoniae (strain 342), this protein is UPF0761 membrane protein KPK_5501.